Consider the following 715-residue polypeptide: MNPIVKQFKYGQHTVTLETGAIARQATAAVMASMDDTTVFVTVVAKKEVKEGQDFFPLTVDYQERTYAAGRIPGGFFKREGRPSEGETLIARLIDRPVRPLFPEGFFNEIQVIATVVSVNPQISPDLVAMIGASAALSLSGVPFNGPIGAARVGFINDQFVLNPTTSEQKISRLDLVVAGTDKAVLMVESEADILSEEQMLSAVVFGHQQQQVVIENIKEFVKEAGKPRWDWVAPEPNTALINQVKALAEARIGDAYRITEKQARYEQIDAIKADVIAQLTTQDETISEGAIIDIITALESSIVRGRIIAGEPRIDGRTVDTVRALDICTGVLPRTHGSAIFTRGETQALAVATLGTERDAQIIDELTGEKSDRFLFHYNFPPYSVGETGRIGSPKRREIGHGRLAKRGVLAVMPTAEEFPYVVRVVSEITESNGSSSMASVCGASLALMDAGVPIKAAVAGIAMGLVKEEEKFVVLSDILGDEDHLGDMDFKVAGTREGVTALQMDIKIEGITPEIMQIALNQAKGARMHILSVMEQAIPAPRADISDFAPRIHTMKIDPKKIKDVIGKGGAVIRALTEETGTSIDIDDDGTVKIAATDNNAAKAVMARIEDIVAEVEVNAIYKGKVTRVVDFGAFVSILGGKEGLVHISQITNERVERVADYLSVGQEVTVKVVEIDRQNRIRLTMKDLNNDTPVAENVTEEAEVSSEQQAEI.

Mg(2+) is bound by residues aspartate 485 and aspartate 491. The 60-residue stretch at 552–611 (PRIHTMKIDPKKIKDVIGKGGAVIRALTEETGTSIDIDDDGTVKIAATDNNAAKAVMARI) folds into the KH domain. In terms of domain architecture, S1 motif spans 621-689 (NAIYKGKVTR…RQNRIRLTMK (69 aa)). The disordered stretch occupies residues 695 to 715 (TPVAENVTEEAEVSSEQQAEI).

Belongs to the polyribonucleotide nucleotidyltransferase family. Component of the RNA degradosome, which is a multiprotein complex involved in RNA processing and mRNA degradation. The cofactor is Mg(2+).

It localises to the cytoplasm. The catalysed reaction is RNA(n+1) + phosphate = RNA(n) + a ribonucleoside 5'-diphosphate. Its function is as follows. Involved in mRNA degradation. Catalyzes the phosphorolysis of single-stranded polyribonucleotides processively in the 3'- to 5'-direction. The protein is Polyribonucleotide nucleotidyltransferase of Actinobacillus pleuropneumoniae serotype 3 (strain JL03).